The primary structure comprises 145 residues: Putative pre-16S rRNA nuclease (145 aa).

The protein belongs to the YqgF nuclease family.

It is found in the cytoplasm. In terms of biological role, could be a nuclease involved in processing of the 5'-end of pre-16S rRNA. In Tropheryma whipplei (strain Twist) (Whipple's bacillus), this protein is Putative pre-16S rRNA nuclease.